Consider the following 168-residue polypeptide: Transcription antitermination protein NusB (168 aa).

It belongs to the NusB family.

Its function is as follows. Involved in transcription antitermination. Required for transcription of ribosomal RNA (rRNA) genes. Binds specifically to the boxA antiterminator sequence of the ribosomal RNA (rrn) operons. In Brucella anthropi (strain ATCC 49188 / DSM 6882 / CCUG 24695 / JCM 21032 / LMG 3331 / NBRC 15819 / NCTC 12168 / Alc 37) (Ochrobactrum anthropi), this protein is Transcription antitermination protein NusB.